The sequence spans 250 residues: mRNA-decapping protein g5R (250 aa).

One can recognise a Nudix hydrolase domain in the interval 97-239 (QKFRKNWLLP…NLEPMIGPAF (143 aa)). Positions 132–153 (GKPKEDESDLTCAIREFEEETG) match the Nudix box motif. Residue E138 participates in Mg(2+) binding. The Nucleophile role is filled by E147. Residues E151 and D173 each coordinate Mg(2+).

This sequence belongs to the Nudix hydrolase family. DIPP subfamily. Interacts with host RPL23A. The cofactor is Mg(2+). Mn(2+) is required as a cofactor.

It localises to the host rough endoplasmic reticulum. The catalysed reaction is diphospho-myo-inositol polyphosphate + H2O = myo-inositol polyphosphate + phosphate.. In terms of biological role, decapping enzyme required for the removal of the 5'-end m7GpppN cap tethered to viral and host mRNAs to allow their decay in cells. May therefore accelerate viral and cellular mRNA turnover to eliminate competing host mRNAs and allow stage-specific synthesis of viral proteins. Acceleration of the turnover of cellular transcripts may even promote the shutoff of host protein synthesis. In addition to the mRNA cap, g5R also efficiently hydrolyzes diphosphoinositol polyphosphates. Down-regulation of the level of PP-InsP5 (diphosphoinositol pentakisphosphate) may play a role in viral manipulation of the cellular secretory pathway, a step necessary for the formation of virions. Binds viral and cellular poly(A) mRNAs, thereby decreasing both types of mRNAs. This is mRNA-decapping protein g5R from Ornithodoros (relapsing fever ticks).